The sequence spans 615 residues: uncharacterized protein (615 aa).

Residue aspartate 403 is the Proton acceptor of the active site. The Proton donor role is filled by glutamate 406.

This sequence belongs to the glycosyl hydrolase 15 family.

This is an uncharacterized protein from Methanocaldococcus jannaschii (strain ATCC 43067 / DSM 2661 / JAL-1 / JCM 10045 / NBRC 100440) (Methanococcus jannaschii).